Consider the following 423-residue polypeptide: Divalent metal cation transporter MntH (423 aa).

11 consecutive transmembrane segments (helical) span residues 31–51 (LMML…GNFA), 58–78 (SSFG…AMLI), 116–136 (IIAI…FQLV), 137–157 (FGIS…MILI), 168–188 (VVIG…LFFA), 213–233 (AAGI…SALF), 254–274 (IAMV…AAVF), 302–322 (VLFG…GTMA), 342–362 (FITM…TDIL), 363–383 (VMSQ…LLIF), and 401–421 (YAGV…MVTL).

The protein belongs to the NRAMP family.

Its subcellular location is the cell inner membrane. Its function is as follows. H(+)-stimulated, divalent metal cation uptake system. The chain is Divalent metal cation transporter MntH from Vibrio campbellii (strain ATCC BAA-1116).